The primary structure comprises 125 residues: Holo-[acyl-carrier-protein] synthase (125 aa).

Aspartate 8 and glutamate 55 together coordinate Mg(2+).

Belongs to the P-Pant transferase superfamily. AcpS family. Requires Mg(2+) as cofactor.

Its subcellular location is the cytoplasm. It catalyses the reaction apo-[ACP] + CoA = holo-[ACP] + adenosine 3',5'-bisphosphate + H(+). In terms of biological role, transfers the 4'-phosphopantetheine moiety from coenzyme A to a Ser of acyl-carrier-protein. The protein is Holo-[acyl-carrier-protein] synthase of Treponema pallidum (strain Nichols).